We begin with the raw amino-acid sequence, 228 residues long: HTH-type transcriptional regulator ArcR (228 aa).

Serine 22–threonine 141 contributes to the a nucleoside 3',5'-cyclic phosphate binding site. Residues lysine 155–leucine 228 enclose the HTH crp-type domain. A DNA-binding region (H-T-H motif) is located at residues isoleucine 188–asparagine 207.

Its subcellular location is the cytoplasm. Functionally, positively regulates the expression of the arcABDCR operon under anaerobic conditions, thus playing an essential role in arginine catabolism. May also control the expression of genes encoding proteins which are involved in anaerobic metabolism. Can bind cyclic AMP. The polypeptide is HTH-type transcriptional regulator ArcR (arcR) (Staphylococcus epidermidis (strain ATCC 35984 / DSM 28319 / BCRC 17069 / CCUG 31568 / BM 3577 / RP62A)).